The sequence spans 252 residues: 5-oxoprolinase subunit A (252 aa).

This sequence belongs to the LamB/PxpA family. As to quaternary structure, forms a complex composed of PxpA, PxpB and PxpC.

The enzyme catalyses 5-oxo-L-proline + ATP + 2 H2O = L-glutamate + ADP + phosphate + H(+). Catalyzes the cleavage of 5-oxoproline to form L-glutamate coupled to the hydrolysis of ATP to ADP and inorganic phosphate. The chain is 5-oxoprolinase subunit A from Mycobacterium marinum (strain ATCC BAA-535 / M).